The primary structure comprises 364 residues: Chorismate synthase (364 aa).

Arg48 is a binding site for NADP(+). FMN is bound by residues 125–127 (RSS), 237–238 (NA), Gly277, 292–296 (KPTSS), and Arg318.

This sequence belongs to the chorismate synthase family. Homotetramer. FMNH2 is required as a cofactor.

The catalysed reaction is 5-O-(1-carboxyvinyl)-3-phosphoshikimate = chorismate + phosphate. It functions in the pathway metabolic intermediate biosynthesis; chorismate biosynthesis; chorismate from D-erythrose 4-phosphate and phosphoenolpyruvate: step 7/7. Functionally, catalyzes the anti-1,4-elimination of the C-3 phosphate and the C-6 proR hydrogen from 5-enolpyruvylshikimate-3-phosphate (EPSP) to yield chorismate, which is the branch point compound that serves as the starting substrate for the three terminal pathways of aromatic amino acid biosynthesis. This reaction introduces a second double bond into the aromatic ring system. In Albidiferax ferrireducens (strain ATCC BAA-621 / DSM 15236 / T118) (Rhodoferax ferrireducens), this protein is Chorismate synthase.